Reading from the N-terminus, the 355-residue chain is Phosphoserine aminotransferase (355 aa).

An L-glutamate-binding site is contributed by R41. Pyridoxal 5'-phosphate contacts are provided by residues 75–76 (AS), W99, T147, D166, and Q189. K190 is subject to N6-(pyridoxal phosphate)lysine. A pyridoxal 5'-phosphate-binding site is contributed by 231 to 232 (NT).

This sequence belongs to the class-V pyridoxal-phosphate-dependent aminotransferase family. SerC subfamily. In terms of assembly, homodimer. Pyridoxal 5'-phosphate is required as a cofactor.

The protein localises to the cytoplasm. The enzyme catalyses O-phospho-L-serine + 2-oxoglutarate = 3-phosphooxypyruvate + L-glutamate. It catalyses the reaction 4-(phosphooxy)-L-threonine + 2-oxoglutarate = (R)-3-hydroxy-2-oxo-4-phosphooxybutanoate + L-glutamate. It participates in amino-acid biosynthesis; L-serine biosynthesis; L-serine from 3-phospho-D-glycerate: step 2/3. The protein operates within cofactor biosynthesis; pyridoxine 5'-phosphate biosynthesis; pyridoxine 5'-phosphate from D-erythrose 4-phosphate: step 3/5. Functionally, catalyzes the reversible conversion of 3-phosphohydroxypyruvate to phosphoserine and of 3-hydroxy-2-oxo-4-phosphonooxybutanoate to phosphohydroxythreonine. In Parabacteroides distasonis (strain ATCC 8503 / DSM 20701 / CIP 104284 / JCM 5825 / NCTC 11152), this protein is Phosphoserine aminotransferase.